The following is a 362-amino-acid chain: Cobalt-precorrin-5B C(1)-methyltransferase (362 aa).

This sequence belongs to the CbiD family.

It carries out the reaction Co-precorrin-5B + S-adenosyl-L-methionine = Co-precorrin-6A + S-adenosyl-L-homocysteine. Its pathway is cofactor biosynthesis; adenosylcobalamin biosynthesis; cob(II)yrinate a,c-diamide from sirohydrochlorin (anaerobic route): step 6/10. Catalyzes the methylation of C-1 in cobalt-precorrin-5B to form cobalt-precorrin-6A. In Synechococcus sp. (strain CC9902), this protein is Cobalt-precorrin-5B C(1)-methyltransferase.